The chain runs to 590 residues: Muscarinic acetylcholine receptor M3 (590 aa).

Over 1–67 (MTLHSNSTTS…DPLGGHTVWQ (67 aa)) the chain is Extracellular. N-linked (GlcNAc...) asparagine glycosylation is found at Asn6, Asn15, Asn41, and Asn48. The helical transmembrane segment at 68 to 91 (VVFIAFLTGILALVTIIGNILVIV) threads the bilayer. Topologically, residues 92-104 (SFKVNKQLKTVNN) are cytoplasmic. Residues 105-130 (YFLLSLACADLIIGVISMNLFTTYII) form a helical membrane-spanning segment. The Extracellular portion of the chain corresponds to 131–142 (MNRWALGNLACD). A disulfide bridge links Cys141 with Cys221. A helical membrane pass occupies residues 143 to 164 (LWLAIDYVASNASVMNLLVISF). At 165 to 184 (DRYFSITRPLTYRAKRTTKR) the chain is on the cytoplasmic side. A helical transmembrane segment spans residues 185 to 206 (AGVMIGLAWVISFVLWAPAILF). Topologically, residues 207-229 (WQYFVGKRTVPPGECFIQFLSEP) are extracellular. Residues 230-252 (TITFGTAIAAFYMPVTIMTILYW) traverse the membrane as a helical segment. Residues 253–491 (RIYKETEKRT…SLVKEKKAAQ (239 aa)) are Cytoplasmic-facing. The short motif at 275 to 281 (AETENFV) is the Basolateral sorting signal element. Residues 323-357 (SSEQMDQDHSSSDSWNNNDAAASLENSASSDEEDI) are disordered. Residues 334-345 (SDSWNNNDAAAS) show a composition bias toward low complexity. Residue Ser385 is modified to Phosphoserine. The helical transmembrane segment at 492–514 (TLSAILLAFIITWTPYNIMVLVN) threads the bilayer. Residues 515–526 (TFCDSCIPKTFW) lie on the Extracellular side of the membrane. A disulfide bridge links Cys517 with Cys520. Residues 527–546 (NLGYWLCYINSTVNPVCYAL) form a helical membrane-spanning segment. At 547–590 (CNKTFRTTFKMLLLCQCDKKKRRKQQYQQRQSVIFHKRAPEQAL) the chain is on the cytoplasmic side.

This sequence belongs to the G-protein coupled receptor 1 family. Muscarinic acetylcholine receptor subfamily. CHRM3 sub-subfamily. As to quaternary structure, homodimer; the dimers can form tetramers. Interacts with NALCN. Interacts with TMEM147.

The protein localises to the cell membrane. It is found in the postsynaptic cell membrane. It localises to the basolateral cell membrane. The protein resides in the endoplasmic reticulum membrane. The muscarinic acetylcholine receptor mediates various cellular responses, including inhibition of adenylate cyclase, breakdown of phosphoinositides and modulation of potassium channels through the action of G proteins. Primary transducing effect is Pi turnover. The polypeptide is Muscarinic acetylcholine receptor M3 (CHRM3) (Pongo pygmaeus (Bornean orangutan)).